The following is a 436-amino-acid chain: Putative F-box/FBD/LRR-repeat protein At5g44960 (436 aa).

Positions 4 to 50 (CDYINELPDSLLTQILLDLRTKDSVKTSVSSKRWRNLWLNVPGLDLF) constitute an F-box domain. 2 LRR repeats span residues 287–310 (ISSVRHMIISGSILEELHSYSKLG) and 397–420 (SAVLKKLTLRFSFFSSIESESYKK). The region spanning 355–407 (EENIDFHEVPQCLISTLEYVHINKLMMMEQSGIKLVNYFIENSAVLKKLTLRF) is the FBD domain.

This is Putative F-box/FBD/LRR-repeat protein At5g44960 from Arabidopsis thaliana (Mouse-ear cress).